The sequence spans 122 residues: Large ribosomal subunit protein uL14c (122 aa).

This sequence belongs to the universal ribosomal protein uL14 family. In terms of assembly, part of the 50S ribosomal subunit.

Its subcellular location is the plastid. The protein resides in the chloroplast. Functionally, binds to 23S rRNA. The polypeptide is Large ribosomal subunit protein uL14c (Platanus occidentalis (Sycamore)).